A 91-amino-acid chain; its full sequence is Putative regulatory protein CLB_2388 (91 aa).

It belongs to the RemA family.

The polypeptide is Putative regulatory protein CLB_2388 (Clostridium botulinum (strain ATCC 19397 / Type A)).